Consider the following 308-residue polypeptide: tRNA pseudouridine synthase B (308 aa).

Asp-45 functions as the Nucleophile in the catalytic mechanism.

This sequence belongs to the pseudouridine synthase TruB family. Type 1 subfamily.

It catalyses the reaction uridine(55) in tRNA = pseudouridine(55) in tRNA. In terms of biological role, responsible for synthesis of pseudouridine from uracil-55 in the psi GC loop of transfer RNAs. This chain is tRNA pseudouridine synthase B, found in Gloeothece citriformis (strain PCC 7424) (Cyanothece sp. (strain PCC 7424)).